A 263-amino-acid polypeptide reads, in one-letter code: 4-hydroxy-tetrahydrodipicolinate reductase (263 aa).

NAD(+) is bound by residues 7–12 (GFKGRM), 96–98 (GTT), and 122–125 (APNF). His152 acts as the Proton donor/acceptor in catalysis. His153 serves as a coordination point for (S)-2,3,4,5-tetrahydrodipicolinate. The active-site Proton donor is Lys156. Residue 162–163 (GT) coordinates (S)-2,3,4,5-tetrahydrodipicolinate.

It belongs to the DapB family.

It is found in the cytoplasm. The catalysed reaction is (S)-2,3,4,5-tetrahydrodipicolinate + NAD(+) + H2O = (2S,4S)-4-hydroxy-2,3,4,5-tetrahydrodipicolinate + NADH + H(+). It carries out the reaction (S)-2,3,4,5-tetrahydrodipicolinate + NADP(+) + H2O = (2S,4S)-4-hydroxy-2,3,4,5-tetrahydrodipicolinate + NADPH + H(+). It participates in amino-acid biosynthesis; L-lysine biosynthesis via DAP pathway; (S)-tetrahydrodipicolinate from L-aspartate: step 4/4. Its function is as follows. Catalyzes the conversion of 4-hydroxy-tetrahydrodipicolinate (HTPA) to tetrahydrodipicolinate. This Listeria monocytogenes serovar 1/2a (strain ATCC BAA-679 / EGD-e) protein is 4-hydroxy-tetrahydrodipicolinate reductase.